Reading from the N-terminus, the 156-residue chain is 6,7-dimethyl-8-ribityllumazine synthase (156 aa).

5-amino-6-(D-ribitylamino)uracil-binding positions include Phe-22, 57-59, and 81-83; these read AYE and TVI. 86–87 provides a ligand contact to (2S)-2-hydroxy-3-oxobutyl phosphate; the sequence is GT. The Proton donor role is filled by His-89. Residue Phe-114 participates in 5-amino-6-(D-ribitylamino)uracil binding. Position 128 (Arg-128) interacts with (2S)-2-hydroxy-3-oxobutyl phosphate.

The protein belongs to the DMRL synthase family. In terms of assembly, forms an icosahedral capsid composed of 60 subunits, arranged as a dodecamer of pentamers.

It catalyses the reaction (2S)-2-hydroxy-3-oxobutyl phosphate + 5-amino-6-(D-ribitylamino)uracil = 6,7-dimethyl-8-(1-D-ribityl)lumazine + phosphate + 2 H2O + H(+). The protein operates within cofactor biosynthesis; riboflavin biosynthesis; riboflavin from 2-hydroxy-3-oxobutyl phosphate and 5-amino-6-(D-ribitylamino)uracil: step 1/2. Catalyzes the formation of 6,7-dimethyl-8-ribityllumazine by condensation of 5-amino-6-(D-ribitylamino)uracil with 3,4-dihydroxy-2-butanone 4-phosphate. This is the penultimate step in the biosynthesis of riboflavin. This chain is 6,7-dimethyl-8-ribityllumazine synthase, found in Yersinia enterocolitica serotype O:8 / biotype 1B (strain NCTC 13174 / 8081).